The following is a 701-amino-acid chain: UvrABC system protein B (701 aa).

The 161-residue stretch at 28–188 (RRIRAGERDV…VDVQYTRNDL (161 aa)) folds into the Helicase ATP-binding domain. 41 to 48 (GATGTGKS) is a binding site for ATP. The Beta-hairpin motif lies at 94-117 (YYDYYQPEAYIAQTDTYIEKDSSI). A Helicase C-terminal domain is found at 432–598 (QIDDLIGEIR…PLRKKIADIL (167 aa)). The segment at 606–636 (DDTEAAESVPIGGSGRNSSRGRRAQGEPGRA) is disordered. A UVR domain is found at 656-691 (ADLIKDLTSQMMVAARDLQFELAARFRDEIADLKKE).

Belongs to the UvrB family. In terms of assembly, forms a heterotetramer with UvrA during the search for lesions. Interacts with UvrC in an incision complex.

It is found in the cytoplasm. Functionally, the UvrABC repair system catalyzes the recognition and processing of DNA lesions. A damage recognition complex composed of 2 UvrA and 2 UvrB subunits scans DNA for abnormalities. Upon binding of the UvrA(2)B(2) complex to a putative damaged site, the DNA wraps around one UvrB monomer. DNA wrap is dependent on ATP binding by UvrB and probably causes local melting of the DNA helix, facilitating insertion of UvrB beta-hairpin between the DNA strands. Then UvrB probes one DNA strand for the presence of a lesion. If a lesion is found the UvrA subunits dissociate and the UvrB-DNA preincision complex is formed. This complex is subsequently bound by UvrC and the second UvrB is released. If no lesion is found, the DNA wraps around the other UvrB subunit that will check the other stand for damage. The sequence is that of UvrABC system protein B from Mycobacterium ulcerans (strain Agy99).